The primary structure comprises 155 residues: MSAIPAGLAIRFKRWEGNADLPVPAYATVGAAGFDLRAHVPDDAPIVLKPGARCMAPTGFSVAIPDGYEMQVRPRSGLALKNGVTVVNAPGTVDSDYRGQVCVLLINLGEEDFTIRRGDRIAQGVIAAAPQWPLVEVEDLDATERGAGGFGSTGV.

Residues 75–77, Asn88, and 92–94 contribute to the substrate site; these read RSG and TVD.

Belongs to the dUTPase family. It depends on Mg(2+) as a cofactor.

The enzyme catalyses dUTP + H2O = dUMP + diphosphate + H(+). It functions in the pathway pyrimidine metabolism; dUMP biosynthesis; dUMP from dCTP (dUTP route): step 2/2. Its function is as follows. This enzyme is involved in nucleotide metabolism: it produces dUMP, the immediate precursor of thymidine nucleotides and it decreases the intracellular concentration of dUTP so that uracil cannot be incorporated into DNA. The protein is Deoxyuridine 5'-triphosphate nucleotidohydrolase of Caulobacter vibrioides (strain ATCC 19089 / CIP 103742 / CB 15) (Caulobacter crescentus).